Reading from the N-terminus, the 137-residue chain is Competence protein ComGG (137 aa).

The helical transmembrane segment at 10–30 (GVLLYAVTIAAIFSLLLQFYL) threads the bilayer. The segment at 106–137 (EKRDKKEEVATDSSEKVEKKKSEEKPEKKENS) is disordered.

In terms of assembly, the transformation pili are flexible filaments, consisting mainly of the major pilin ComGC and smaller amounts of the minor pilins, including at least ComGD, ComGF and ComGG, and perhaps ComGE. Interacts with ComGC; the interaction is probably direct. Interacts with ComGD. Interacts with ComGE. Interacts with ComGF. May act as a link between ComGC, ComGD and ComGF.

The protein resides in the fimbrium. Its subcellular location is the cell membrane. Functionally, required for formation of the type IV-like pilus (T4P) that plays a role in transformation. Transformation pili are dynamically extended and retracted, perhaps thereby promoting DNA uptake and transformation. Required for transformation. This Streptococcus pneumoniae (strain ATCC BAA-255 / R6) protein is Competence protein ComGG.